Here is a 189-residue protein sequence, read N- to C-terminus: Guanylate kinase (189 aa).

The Guanylate kinase-like domain occupies 8 to 186 (GKLTVITGPS…AVIELESLMG (179 aa)). 15–22 (GPSGVGKG) provides a ligand contact to ATP.

The protein belongs to the guanylate kinase family.

The protein localises to the cytoplasm. It catalyses the reaction GMP + ATP = GDP + ADP. Functionally, essential for recycling GMP and indirectly, cGMP. This is Guanylate kinase from Prochlorococcus marinus (strain MIT 9313).